The sequence spans 239 residues: MICOS complex subunit mic25a (239 aa).

Gly-2 carries the N-myristoyl glycine lipid modification. Disordered regions lie at residues 27–88 (VKLS…KKRY) and 113–133 (DISRAVQRERAQTRQESERAK). The span at 50 to 78 (NKENQGHQTRTPSTSDAQAPKTQAKTTFP) shows a compositional bias: polar residues. The segment covering 79–88 (DSKEELKKRY) has biased composition (basic and acidic residues). Positions 79 to 166 (DSKEELKKRY…ITQLEKKNEE (88 aa)) form a coiled coil. The 43-residue stretch at 192-234 (EPVCLNLQAQILNCYRENREQTLQCSDLAKEYMQCINAAKKNL) folds into the CHCH domain. 2 short sequence motifs (cx9C motif) span residues 195–205 (CLNLQAQILNC) and 216–226 (CSDLAKEYMQC). Disulfide bonds link Cys-195–Cys-226 and Cys-205–Cys-216.

It belongs to the MICOS complex subunit Mic19 family. Metazoan Mic25 subfamily. As to quaternary structure, component of the mitochondrial contact site and cristae organizing system (MICOS) complex (also known as MINOS or MitOS complex).

The protein localises to the mitochondrion inner membrane. Its function is as follows. Component of the MICOS complex, a large protein complex of the mitochondrial inner membrane that plays crucial roles in the maintenance of crista junctions, inner membrane architecture, and formation of contact sites to the outer membrane. The sequence is that of MICOS complex subunit mic25a (chchd6a) from Danio rerio (Zebrafish).